The following is a 142-amino-acid chain: Hemoglobin subunit alpha-1/2 (142 aa).

One can recognise a Globin domain in the interval 2–142; sequence VLSPADKTNI…VSTVLTSKYR (141 aa). Residue S4 is modified to Phosphoserine. K8 is subject to N6-succinyllysine. Position 9 is a phosphothreonine (T9). At K12 the chain carries N6-succinyllysine. Position 17 is an N6-acetyllysine; alternate (K17). K17 is modified (N6-succinyllysine; alternate). Residue Y25 is modified to Phosphotyrosine. Residue K41 is modified to N6-succinyllysine. H59 serves as a coordination point for O2. A heme b-binding site is contributed by H88. S103 carries the phosphoserine modification. Residue T109 is modified to Phosphothreonine. S125 carries the post-translational modification Phosphoserine. Phosphothreonine is present on residues T135 and T138. At S139 the chain carries Phosphoserine.

Belongs to the globin family. As to quaternary structure, heterotetramer of two alpha chains and two beta chains. Red blood cells.

Its function is as follows. Involved in oxygen transport from the lung to the various peripheral tissues. The protein is Hemoglobin subunit alpha-1/2 of Oryctolagus cuniculus (Rabbit).